Here is a 114-residue protein sequence, read N- to C-terminus: Procyclic form-specific polypeptide A-alpha (114 aa).

An N-terminal signal peptide occupies residues 1–27 (MAPRSLYLLAILLFSANLFAGVGFAAA). The segment at 33–95 (SNVIVKGGKG…EPEPEPGAAT (63 aa)) is disordered. The segment covering 47 to 89 (DGPEEPEETGPEETGPEETGPEETGPEETGPEETGPEETEPEP) has biased composition (acidic residues). 7 consecutive repeat copies span residues 48–52 (GPEEP), 56–60 (GPEET), 61–65 (GPEET), 66–70 (GPEET), 71–75 (GPEET), 76–80 (GPEET), and 81–85 (GPEET). Residues 48 to 85 (GPEEPEETGPEETGPEETGPEETGPEETGPEETGPEET) are 7 X 5 AA tandem repeats of G-P-E-E-[PT]. Residue G92 is the site of GPI-anchor amidated glycine attachment. Positions 93-114 (AATLKSVALPFAVAAAALVAAF) are excised as a propeptide.

It localises to the cell membrane. Functionally, major surface antigen of procyclic forms. The chain is Procyclic form-specific polypeptide A-alpha (PARPA-ALPHA) from Trypanosoma brucei brucei.